The chain runs to 192 residues: Peptidyl-tRNA hydrolase (192 aa).

Tyr-17 serves as a coordination point for tRNA. Residue His-22 is the Proton acceptor of the active site. Tyr-68, Asn-70, and Asn-116 together coordinate tRNA.

Belongs to the PTH family. Monomer.

The protein localises to the cytoplasm. The enzyme catalyses an N-acyl-L-alpha-aminoacyl-tRNA + H2O = an N-acyl-L-amino acid + a tRNA + H(+). Hydrolyzes ribosome-free peptidyl-tRNAs (with 1 or more amino acids incorporated), which drop off the ribosome during protein synthesis, or as a result of ribosome stalling. Its function is as follows. Catalyzes the release of premature peptidyl moieties from peptidyl-tRNA molecules trapped in stalled 50S ribosomal subunits, and thus maintains levels of free tRNAs and 50S ribosomes. The sequence is that of Peptidyl-tRNA hydrolase from Mycolicibacterium gilvum (strain PYR-GCK) (Mycobacterium gilvum (strain PYR-GCK)).